A 273-amino-acid polypeptide reads, in one-letter code: Large ribosomal subunit protein uL2c (273 aa).

It belongs to the universal ribosomal protein uL2 family. In terms of assembly, part of the 50S ribosomal subunit.

Its subcellular location is the plastid. It is found in the apicoplast. The sequence is that of Large ribosomal subunit protein uL2c (rpl2) from Eimeria tenella (Coccidian parasite).